The sequence spans 495 residues: Probable biotin-dependent acyl-coenzyme A carboxylase beta3 subunit (495 aa).

Positions 1-236 (MSRITTDQLR…PLPAPQTPAP (236 aa)) constitute a CoA carboxyltransferase N-terminal domain. One can recognise a CoA carboxyltransferase C-terminal domain in the interval 242-470 (TWDSVVASRR…SNAIAAEVHA (229 aa)).

It belongs to the AccD/PCCB family. The biotin-dependent acyl-CoA carboxylase complex is composed of an AccA protein, which contains the biotin carboxylase (BC) and biotin carboxyl carrier protein (BCCP) domains, and an AccD protein, which contains the carboxyl transferase (CT) domain.

Functionally, component of a biotin-dependent acyl-CoA carboxylase complex. This subunit transfers the CO2 from carboxybiotin to the CoA ester substrate. The polypeptide is Probable biotin-dependent acyl-coenzyme A carboxylase beta3 subunit (accD3) (Mycobacterium bovis (strain ATCC BAA-935 / AF2122/97)).